A 69-amino-acid polypeptide reads, in one-letter code: MRFLNIFLFFAAIIAFATASQVFEEDEIDMEPRITCDLIGNERLCVLHCLAKGFRGGWCDGRKVCNCRR.

The N-terminal stretch at M1 to A19 is a signal peptide. Residues S20–R33 constitute a propeptide that is removed on maturation. 3 disulfide bridges follow: C36-C59, C45-C65, and C49-C67.

The protein belongs to the asilidin-12 family. Expressed by the venom gland.

It is found in the secreted. In terms of biological role, moderately increases Kv11.1/KCNH2/ERG1 currents and shifts the voltage-dependence of the channel activation to hyperpolarised potentials. In vivo, induces neurotoxic effects when injected into insects (tested on L.cuprina and A.domesticus). This Dolopus genitalis (Giant Australian assassin fly) protein is U-Asilidin(12)-Dg3a.